Reading from the N-terminus, the 97-residue chain is Co-chaperonin GroES (97 aa).

This sequence belongs to the GroES chaperonin family. In terms of assembly, heptamer of 7 subunits arranged in a ring. Interacts with the chaperonin GroEL.

The protein resides in the cytoplasm. In terms of biological role, together with the chaperonin GroEL, plays an essential role in assisting protein folding. The GroEL-GroES system forms a nano-cage that allows encapsulation of the non-native substrate proteins and provides a physical environment optimized to promote and accelerate protein folding. GroES binds to the apical surface of the GroEL ring, thereby capping the opening of the GroEL channel. In Buchnera aphidicola subsp. Cinara cedri (strain Cc), this protein is Co-chaperonin GroES.